Consider the following 1020-residue polypeptide: Carbamoyl phosphate synthase arginine-specific large chain (1020 aa).

The tract at residues 1–401 (MPKNNAIHSI…ATLKAIASLE (401 aa)) is carboxyphosphate synthetic domain. Positions 129, 169, 175, 176, 208, 210, 215, 241, 242, 243, 284, and 298 each coordinate ATP. An ATP-grasp 1 domain is found at 133 to 327 (KTLMKRLHQP…IAKIAADIAI (195 aa)). 3 residues coordinate Mg(2+): Gln284, Glu298, and Asn300. Mn(2+) contacts are provided by Gln284, Glu298, and Asn300. 2 oligomerization domain regions span residues 402-542 (IDPK…FGQT) and 402-544 (IDPK…QTNE). Carbamoyl phosphate synthetic domain stretches follow at residues 543-927 (NESH…ADSY) and 544-927 (ESHP…ADSY). Residues 669 to 858 (ADCLRLLKIA…LAQLATRLIL (190 aa)) form the ATP-grasp 2 domain. Positions 705, 744, 746, 750, 775, 776, 777, 778, and 818 each coordinate ATP. Positions 818 and 831 each coordinate Mg(2+). Mn(2+) is bound by residues Gln818 and Asn831. The region spanning 927-1020 (YHLETWQTVD…LAVTPTPATI (94 aa)) is the MGS-like domain. Residues 928 to 1020 (HLETWQTVDG…LAVTPTPATI (93 aa)) are allosteric domain.

The protein belongs to the CarB family. As to quaternary structure, composed of two chains; the small (or glutamine) chain promotes the hydrolysis of glutamine to ammonia, which is used by the large (or ammonia) chain to synthesize carbamoyl phosphate. Tetramer of heterodimers (alpha,beta)4. It depends on Mg(2+) as a cofactor. The cofactor is Mn(2+).

The enzyme catalyses hydrogencarbonate + L-glutamine + 2 ATP + H2O = carbamoyl phosphate + L-glutamate + 2 ADP + phosphate + 2 H(+). It carries out the reaction hydrogencarbonate + NH4(+) + 2 ATP = carbamoyl phosphate + 2 ADP + phosphate + 2 H(+). Its pathway is amino-acid biosynthesis; L-arginine biosynthesis; carbamoyl phosphate from bicarbonate: step 1/1. Its function is as follows. Large subunit of the glutamine-dependent carbamoyl phosphate synthetase (CPSase). CPSase catalyzes the formation of carbamoyl phosphate from the ammonia moiety of glutamine, carbonate, and phosphate donated by ATP, constituting the first step of the biosynthetic pathway leading to arginine and/or urea. The large subunit (synthetase) binds the substrates ammonia (free or transferred from glutamine from the small subunit), hydrogencarbonate and ATP and carries out an ATP-coupled ligase reaction, activating hydrogencarbonate by forming carboxy phosphate which reacts with ammonia to form carbamoyl phosphate. The protein is Carbamoyl phosphate synthase arginine-specific large chain of Lactiplantibacillus plantarum (strain ATCC BAA-793 / NCIMB 8826 / WCFS1) (Lactobacillus plantarum).